Consider the following 208-residue polypeptide: Histone H1t (208 aa).

Residues 1-12 (MSETAPAASSTL) are compositionally biased toward polar residues. The interval 1–39 (MSETAPAASSTLVPAPVEKPSSKRRGKKPGLAPARKPRG) is disordered. Ser9 is subject to Phosphoserine. Residues 38–111 (RGFSVSKLIP…GASGSFKLSK (74 aa)) form the H15 domain. Citrulline is present on Arg56. The interval 95 to 208 (LVQTKGTGAS…TDLRKAAGRK (114 aa)) is disordered. A compositionally biased stretch (basic residues) spans 121–134 (KGKKSASAKAKKMG). Ser141 bears the Phosphoserine mark. The span at 143–154 (KSSKTKAVKKPK) shows a compositional bias: basic residues. A Phosphothreonine modification is found at Thr156. Ser163 and Ser178 each carry phosphoserine. Over residues 199 to 208 (TDLRKAAGRK) the composition is skewed to basic and acidic residues.

It belongs to the histone H1/H5 family. Post-translationally, phosphorylated in early spermatids. Citrullination at Arg-56 (H1R54ci) by PADI4 takes place within the DNA-binding site of H1 and results in its displacement from chromatin and global chromatin decondensation, thereby promoting pluripotency and stem cell maintenance. As to expression, testis-specific.

It localises to the nucleus. Its subcellular location is the chromosome. Testis-specific histone H1 that forms less compacted chromatin compared to other H1 histone subtypes. Formation of more relaxed chromatin may be required to promote chromatin architecture required for proper chromosome regulation during meiosis, such as homologous recombination. Histones H1 act as linkers that bind to nucleosomes and compact polynucleosomes into a higher-order chromatin configuration. This Mus musculus (Mouse) protein is Histone H1t.